The following is a 357-amino-acid chain: NADH-quinone oxidoreductase subunit H (357 aa).

8 consecutive transmembrane segments (helical) span residues 20 to 40, 92 to 112, 127 to 147, 165 to 185, 206 to 226, 254 to 274, 294 to 314, and 329 to 349; these read WLVL…ILCV, ILFV…WAVV, LLYV…AGWA, VSYE…SGSL, FLSW…ISAV, MAFA…SCMA, IPGW…FVWF, and LGWK…AIWM.

The protein belongs to the complex I subunit 1 family. NDH-1 is composed of 14 different subunits. Subunits NuoA, H, J, K, L, M, N constitute the membrane sector of the complex.

It is found in the cell inner membrane. It catalyses the reaction a quinone + NADH + 5 H(+)(in) = a quinol + NAD(+) + 4 H(+)(out). Functionally, NDH-1 shuttles electrons from NADH, via FMN and iron-sulfur (Fe-S) centers, to quinones in the respiratory chain. The immediate electron acceptor for the enzyme in this species is believed to be ubiquinone. Couples the redox reaction to proton translocation (for every two electrons transferred, four hydrogen ions are translocated across the cytoplasmic membrane), and thus conserves the redox energy in a proton gradient. This subunit may bind ubiquinone. The sequence is that of NADH-quinone oxidoreductase subunit H from Bordetella petrii (strain ATCC BAA-461 / DSM 12804 / CCUG 43448).